The sequence spans 295 residues: Inositol polyphosphate multikinase IPK2 (295 aa).

The disordered stretch occupies residues 1 to 21 (MASDLRPPEHQVAGHRASADK).

This sequence belongs to the inositol phosphokinase (IPK) family.

It carries out the reaction 1D-myo-inositol 1,4,5-trisphosphate + 2 ATP = 1D-myo-inositol 1,3,4,5,6-pentakisphosphate + 2 ADP + 2 H(+). The enzyme catalyses 1D-myo-inositol 1,3,4,6-tetrakisphosphate + ATP = 1D-myo-inositol 1,3,4,5,6-pentakisphosphate + ADP + H(+). Inositol phosphate kinase with a broad substrate specificity. Phosphorylates inositol 1,4,5-trisphosphate (Ins(1,4,5)P3), inositol 1,4,5,6-tetrakisphosphate (Ins(1,4,5,6)P4), inositol 1,3,4,5-tetrakisphosphate (Ins(1,3,4,5)P4), inositol 1,3,4,6-tetrakisphosphate (Ins(1,3,4,6)P4) and inositol 1,2,3,4,6-pentakisphosphate (Ins(1,2,3,4,6)P5) but not inositol 1,4-bisphosphate (Ins(1,4)P2), inositol 1,3,4-trisphosphate (Ins(1,3,4)P3), inositol 1,2,6-trisphosphate (Ins(1,2,6)P3), inositol 3,4,5,6-tetrakisphosphate (Ins(3,4,5,6)P4), inositol 1,3,4,5,6-pentakisphosphate (Ins(1,3,4,5,6)P5), inositol 1,2,4,5,6-pentakisphosphate (Ins(1,2,4,5,6)P5) or inositol hexakisphosphate (InsP6). Regulates pollen and root development probably through the regulation of InsP3-mediated calcium accumulation. The chain is Inositol polyphosphate multikinase IPK2 from Oryza sativa subsp. indica (Rice).